A 145-amino-acid chain; its full sequence is SsrA-binding protein (145 aa).

The protein belongs to the SmpB family.

It is found in the cytoplasm. In terms of biological role, required for rescue of stalled ribosomes mediated by trans-translation. Binds to transfer-messenger RNA (tmRNA), required for stable association of tmRNA with ribosomes. tmRNA and SmpB together mimic tRNA shape, replacing the anticodon stem-loop with SmpB. tmRNA is encoded by the ssrA gene; the 2 termini fold to resemble tRNA(Ala) and it encodes a 'tag peptide', a short internal open reading frame. During trans-translation Ala-aminoacylated tmRNA acts like a tRNA, entering the A-site of stalled ribosomes, displacing the stalled mRNA. The ribosome then switches to translate the ORF on the tmRNA; the nascent peptide is terminated with the 'tag peptide' encoded by the tmRNA and targeted for degradation. The ribosome is freed to recommence translation, which seems to be the essential function of trans-translation. The polypeptide is SsrA-binding protein (Mesomycoplasma hyopneumoniae (strain 232) (Mycoplasma hyopneumoniae)).